The primary structure comprises 360 residues: COP9 signalosome complex subunit 5 (360 aa).

The region spanning 60 to 197 is the MPN domain; it reads AKISALALLK…IGAFRTYPKD (138 aa). 3 residues coordinate Zn(2+): His143, His145, and Asp156. The short motif at 143–156 is the JAMM motif element; it reads HSHPGYGCWLSGID. 2 disordered regions span residues 293–315 and 341–360; these read LMPS…RDSS and SNKA…MVEA. Residues 341–350 show a composition bias toward polar residues; sequence SNKASTSAPD.

This sequence belongs to the peptidase M67A family. CSN5 subfamily. Component of the CSN complex, probably composed of CSN1, CSN2, CSN3, CSN4, CSN5, CSN6, CSN7 and CSN8. Interacts with MCM2.

Functionally, probable protease subunit of the COP9 signalosome complex (CSN), a complex involved in various cellular and developmental processes such as photomorphogenesis and response to hormones. The CSN complex is an essential regulator of the ubiquitin (Ubl) conjugation pathway by mediating the deneddylation of the cullin subunits of SCF-type E3 ligase complexes, leading to decrease the Ubl ligase activity of SCF. Involved in early response to iron deficiency. This is COP9 signalosome complex subunit 5 from Oryza sativa subsp. japonica (Rice).